The sequence spans 193 residues: Large ribosomal subunit protein eL18 (193 aa).

The disordered stretch occupies residues 158 to 193; the sequence is HFGAAGVPGSHAKPFTSNRGKERQRSSARRRAFRHK. Residues 183 to 193 are compositionally biased toward basic residues; sequence SSARRRAFRHK.

Belongs to the eukaryotic ribosomal protein eL18 family.

It localises to the cytoplasm. The protein is Large ribosomal subunit protein eL18 (RPL18) of Trypanosoma cruzi (strain CL Brener).